The chain runs to 260 residues: Small ribosomal subunit protein eS1 (260 aa).

The span at 1–18 shows a compositional bias: basic residues; sequence MAVGKNKRISKGKKGGKK. The interval 1-22 is disordered; the sequence is MAVGKNKRISKGKKGGKKKAAD.

It belongs to the eukaryotic ribosomal protein eS1 family. As to quaternary structure, component of the small ribosomal subunit. Mature ribosomes consist of a small (40S) and a large (60S) subunit. The 40S subunit contains about 33 different proteins and 1 molecule of RNA (18S). The 60S subunit contains about 49 different proteins and 3 molecules of RNA (25S, 5.8S and 5S).

It localises to the cytoplasm. This Helianthus annuus (Common sunflower) protein is Small ribosomal subunit protein eS1.